Reading from the N-terminus, the 611-residue chain is Calmegin (611 aa).

Positions 1 to 19 (MRFQGVGLCLGLLFITVNA) are cleaved as a signal peptide. Residues 20-471 (DFMDDGVEVE…LVIAAEERPW (452 aa)) are Lumenal-facing. K128 bears the N6-acetyllysine mark. A disulfide bond links C151 and C185. A disordered region spans residues 254–335 (LDDVVPPINP…KAEKPEDWSD (82 aa)). The span at 265–284 (REIDDPSDKKPEEWDDRAKI) shows a compositional bias: basic and acidic residues. Tandem repeats lie at residues 267–280 (IDDP…EWDD), 284–297 (IPDP…DWDE), 303–316 (IEDS…GWLD), 322–335 (IPNP…DWSD), 339–352 (GEWE…PACQ), 356–369 (GEWK…PKYK), 370–383 (GIWR…PNYQ), and 384–397 (GLWS…PDYF). Positions 317–350 (DEPKFIPNPKAEKPEDWSDDMDGEWEAPHIPNPA) are interaction with PPIB. Cysteines 351 and 355 form a disulfide. A helical membrane pass occupies residues 472–492 (LWLMYLVMAGLPVALVASFCW). Residues 493 to 611 (PRKVKKKYED…SLRKRRVRKD (119 aa)) lie on the Cytoplasmic side of the membrane. Positions 517–611 (AALEQEAEEE…SLRKRRVRKD (95 aa)) are disordered. The span at 526–584 (EKAPEKPEDVQEEKKPGEAEVVTVEKEVIGEPEEKSKEDRETLEGQEEVSKLSKSGSED) shows a compositional bias: basic and acidic residues. A phosphoserine mark is found at S561, S578, S580, S582, S592, S595, and S602. The span at 602–611 (SLRKRRVRKD) shows a compositional bias: basic residues.

It belongs to the calreticulin family. As to quaternary structure, interacts with PDILT and PPIB. Interacts with ADAM2. Interacts with ADAM1A, ADAM1B and ADAM3; these are protein-coding genes in mouse but may be pseudogenes in other organisms. Detected in testis (at protein level). Detected in testis.

The protein localises to the endoplasmic reticulum membrane. In terms of biological role, functions during spermatogenesis as a chaperone for a range of client proteins that are important for sperm adhesion onto the egg zona pellucida and for subsequent penetration of the zona pellucida. Required for normal sperm migration from the uterus into the oviduct. Required for normal male fertility. Binds calcium ions. The polypeptide is Calmegin (Clgn) (Mus musculus (Mouse)).